A 382-amino-acid polypeptide reads, in one-letter code: 1-deoxy-D-xylulose 5-phosphate reductoisomerase (382 aa).

Thr-10, Gly-11, Ser-12, Ile-13, Gly-36, and Asn-122 together coordinate NADPH. Lys-123 provides a ligand contact to 1-deoxy-D-xylulose 5-phosphate. Glu-124 is an NADPH binding site. Asp-148 provides a ligand contact to Mn(2+). 4 residues coordinate 1-deoxy-D-xylulose 5-phosphate: Ser-149, Glu-150, Ser-174, and His-197. Glu-150 contacts Mn(2+). Gly-203 is an NADPH binding site. 1-deoxy-D-xylulose 5-phosphate is bound by residues Ser-210, Asn-215, Lys-216, and Glu-219. Residue Glu-219 coordinates Mn(2+).

This sequence belongs to the DXR family. The cofactor is Mg(2+). It depends on Mn(2+) as a cofactor.

It carries out the reaction 2-C-methyl-D-erythritol 4-phosphate + NADP(+) = 1-deoxy-D-xylulose 5-phosphate + NADPH + H(+). It functions in the pathway isoprenoid biosynthesis; isopentenyl diphosphate biosynthesis via DXP pathway; isopentenyl diphosphate from 1-deoxy-D-xylulose 5-phosphate: step 1/6. Functionally, catalyzes the NADPH-dependent rearrangement and reduction of 1-deoxy-D-xylulose-5-phosphate (DXP) to 2-C-methyl-D-erythritol 4-phosphate (MEP). This Prosthecochloris aestuarii (strain DSM 271 / SK 413) protein is 1-deoxy-D-xylulose 5-phosphate reductoisomerase.